A 245-amino-acid chain; its full sequence is Phosphoribosylaminoimidazole-succinocarboxamide synthase (245 aa).

This sequence belongs to the SAICAR synthetase family.

The enzyme catalyses 5-amino-1-(5-phospho-D-ribosyl)imidazole-4-carboxylate + L-aspartate + ATP = (2S)-2-[5-amino-1-(5-phospho-beta-D-ribosyl)imidazole-4-carboxamido]succinate + ADP + phosphate + 2 H(+). The protein operates within purine metabolism; IMP biosynthesis via de novo pathway; 5-amino-1-(5-phospho-D-ribosyl)imidazole-4-carboxamide from 5-amino-1-(5-phospho-D-ribosyl)imidazole-4-carboxylate: step 1/2. The polypeptide is Phosphoribosylaminoimidazole-succinocarboxamide synthase (Nostoc punctiforme (strain ATCC 29133 / PCC 73102)).